The primary structure comprises 95 residues: Citrate lyase acyl carrier protein (95 aa).

Position 14 is an O-(phosphoribosyl dephospho-coenzyme A)serine (serine 14).

This sequence belongs to the CitD family. As to quaternary structure, oligomer with a subunit composition of (alpha,beta,gamma)6.

Its subcellular location is the cytoplasm. In terms of biological role, covalent carrier of the coenzyme of citrate lyase. In Haemophilus influenzae (strain ATCC 51907 / DSM 11121 / KW20 / Rd), this protein is Citrate lyase acyl carrier protein.